Reading from the N-terminus, the 136-residue chain is MLQPKRTKFRKMHKGRNRGLAQGTDVSFGSFGLKAVGRGRLTARQIEAARRAMTRAVKRQGKIWIRVFPDKPITEKPLAVRMGKGKGNVEYWVALIQPGKVLYEMGGVPEELAREAFKLAAAKLPIKTTFVTKTVM.

It belongs to the universal ribosomal protein uL16 family. As to quaternary structure, part of the 50S ribosomal subunit.

In terms of biological role, binds 23S rRNA and is also seen to make contacts with the A and possibly P site tRNAs. This Shigella flexneri protein is Large ribosomal subunit protein uL16.